The sequence spans 62 residues: Large ribosomal subunit protein bL32 (62 aa).

The protein belongs to the bacterial ribosomal protein bL32 family.

The polypeptide is Large ribosomal subunit protein bL32 (Treponema denticola (strain ATCC 35405 / DSM 14222 / CIP 103919 / JCM 8153 / KCTC 15104)).